Reading from the N-terminus, the 205-residue chain is Regulator of G-protein signaling 4 (205 aa).

3 S-palmitoyl cysteine lipidation sites follow: C2, C12, and C95. The RGS domain maps to 62–178; that stretch reads SLENLISHEC…LKSRFYLDLV (117 aa).

Palmitoylated on Cys-2 and/or Cys-12. Post-translationally, phosphorylated by cyclic GMP-dependent protein kinase. As to expression, expressed in brain and heart. Expressed in brain at protein level. Expressed in prefontal and visual cortex. Isoform 4 and isoform 5 are expressed ubiquitously. Isoform 1, isoform 2 and isoform 3 are not expressed in the cerebellum.

Functionally, inhibits signal transduction by increasing the GTPase activity of G protein alpha subunits thereby driving them into their inactive GDP-bound form. Activity on G(z)-alpha is inhibited by phosphorylation of the G-protein. Activity on G(z)-alpha and G(i)-alpha-1 is inhibited by palmitoylation of the G-protein. This Homo sapiens (Human) protein is Regulator of G-protein signaling 4 (RGS4).